The following is a 151-amino-acid chain: Large ribosomal subunit protein bL9 (151 aa).

Belongs to the bacterial ribosomal protein bL9 family.

Functionally, binds to the 23S rRNA. The sequence is that of Large ribosomal subunit protein bL9 from Oenococcus oeni (strain ATCC BAA-331 / PSU-1).